We begin with the raw amino-acid sequence, 409 residues long: Serine/threonine transporter SstT (409 aa).

A run of 8 helical transmembrane segments spans residues Leu-24–Phe-44, Phe-48–Ile-68, Ile-82–Met-102, Ala-142–Leu-162, Leu-194–Gly-214, Leu-218–Val-238, Ile-292–Met-312, and Gly-319–Cys-339.

It belongs to the dicarboxylate/amino acid:cation symporter (DAACS) (TC 2.A.23) family.

It is found in the cell inner membrane. The catalysed reaction is L-serine(in) + Na(+)(in) = L-serine(out) + Na(+)(out). It carries out the reaction L-threonine(in) + Na(+)(in) = L-threonine(out) + Na(+)(out). In terms of biological role, involved in the import of serine and threonine into the cell, with the concomitant import of sodium (symport system). The chain is Serine/threonine transporter SstT from Neisseria meningitidis serogroup B (strain ATCC BAA-335 / MC58).